We begin with the raw amino-acid sequence, 376 residues long: N-acetyldiaminopimelate deacetylase (376 aa).

D70 is a catalytic residue. Residue E129 is the Proton acceptor of the active site.

The protein belongs to the peptidase M20A family. N-acetyldiaminopimelate deacetylase subfamily.

The catalysed reaction is N-acetyl-(2S,6S)-2,6-diaminopimelate + H2O = (2S,6S)-2,6-diaminopimelate + acetate. The protein operates within amino-acid biosynthesis; L-lysine biosynthesis via DAP pathway; LL-2,6-diaminopimelate from (S)-tetrahydrodipicolinate (acetylase route): step 3/3. Functionally, catalyzes the conversion of N-acetyl-diaminopimelate to diaminopimelate and acetate. The protein is N-acetyldiaminopimelate deacetylase of Bacillus pumilus (strain SAFR-032).